Reading from the N-terminus, the 115-residue chain is Virion-associated protein (115 aa).

Coiled coils occupy residues 1–28 (MAAT…MLER) and 33–54 (KPTG…KIDQ). Polar residues predominate over residues 96–106 (GNEELGSSGNP). Residues 96–115 (GNEELGSSGNPNAVKWPPRK) are disordered.

The protein belongs to the caulimovirus ORF III family. As to quaternary structure, homotetramer, through coiled-coil domain. Homotrimer when interacts with icosehadral capsid. Interacts with capsid protein, and with Movement protein.

The protein resides in the virion. It localises to the host cell junction. Its subcellular location is the host plasmodesma. Functionally, plays a role in virus cell-to-cell and plant-to-plant transmission. Interacts with virion icosahedral capsid and movement protein, thereby facilitating virion cell-to-cell transmission through plasmodesmata opened by viral movement protein. Also interacts with aphid transmission factor, attaching the virion to aphid stylet when the animal feeds on an virus infected plant. Aphid saliva may later detach the virion, inducing release of infectious particles when the animal feeds on a new plant. The sequence is that of Virion-associated protein from Scrophularia californica (California bee plant).